A 58-amino-acid polypeptide reads, in one-letter code: Rho-conotoxin TIA (58 aa).

An N-terminal signal peptide occupies residues 1–16 (MFTVFLLVVLATTGVS). A propeptide spanning residues 17–38 (FTLDRASDGGNAVAKKSDVTAR) is cleaved from the precursor. An interaction with ADRA1B region spans residues 40–42 (NWR). Intrachain disulfides connect cysteine 43–cysteine 49 and cysteine 44–cysteine 57. Positions 45-47 (LIP) are lacks the Ser-Xaa-Pro motif that is crucial for potent interaction with nAChR. Position 57 is a cysteine amide (cysteine 57).

It belongs to the conotoxin A superfamily. Expressed by the venom duct.

It localises to the secreted. In terms of biological role, allosteric inhibitor of alpha-1B adrenergic receptors (ADRA1B). Binds to an allosteric modulatory site on transmembrane helix 6 and 7 at the base of extracellular loop 3 of ADRA1B. Also weakly inhibits alpha-1A (ADRA1A) and alpha-1D (ADRA1D) adrenergic receptors in a competitive manner. Potently inhibits contractions of vas deferens, spleen and aorta in response to noradrenaline. May also inhibits nicotinic acetylcholine receptors with a possible distinct nAChR binding mode from other alpha-conotoxins, due to a different three residue motif (lacks the Ser-Xaa-Pro motif). The protein is Rho-conotoxin TIA of Conus tulipa (Fish-hunting cone snail).